A 350-amino-acid polypeptide reads, in one-letter code: Spermidine/putrescine import ATP-binding protein PotA (350 aa).

In terms of domain architecture, ABC transporter spans 6-236 (LELRNVTKDY…PENLWVAKFI (231 aa)). 38–45 (GPSGCGKT) is an ATP binding site.

The protein belongs to the ABC transporter superfamily. Spermidine/putrescine importer (TC 3.A.1.11.1) family. As to quaternary structure, the complex is composed of two ATP-binding proteins (PotA), two transmembrane proteins (PotB and PotC) and a solute-binding protein (PotD).

The protein localises to the cell membrane. The enzyme catalyses ATP + H2O + polyamine-[polyamine-binding protein]Side 1 = ADP + phosphate + polyamineSide 2 + [polyamine-binding protein]Side 1.. Functionally, part of the ABC transporter complex PotABCD involved in spermidine/putrescine import. Responsible for energy coupling to the transport system. The chain is Spermidine/putrescine import ATP-binding protein PotA from Mesoplasma florum (strain ATCC 33453 / NBRC 100688 / NCTC 11704 / L1) (Acholeplasma florum).